The primary structure comprises 273 residues: Dermonecrotic toxin LamSicTox-alphaIC1 (273 aa).

The active site involves H5. E25 and D27 together coordinate Mg(2+). H41 functions as the Nucleophile in the catalytic mechanism. Cystine bridges form between C45–C51 and C47–C190. D85 is a binding site for Mg(2+).

It belongs to the arthropod phospholipase D family. Class II subfamily. It depends on Mg(2+) as a cofactor. Expressed by the venom gland.

Its subcellular location is the secreted. It catalyses the reaction an N-(acyl)-sphingosylphosphocholine = an N-(acyl)-sphingosyl-1,3-cyclic phosphate + choline. It carries out the reaction an N-(acyl)-sphingosylphosphoethanolamine = an N-(acyl)-sphingosyl-1,3-cyclic phosphate + ethanolamine. The enzyme catalyses a 1-acyl-sn-glycero-3-phosphocholine = a 1-acyl-sn-glycero-2,3-cyclic phosphate + choline. The catalysed reaction is a 1-acyl-sn-glycero-3-phosphoethanolamine = a 1-acyl-sn-glycero-2,3-cyclic phosphate + ethanolamine. Functionally, dermonecrotic toxins cleave the phosphodiester linkage between the phosphate and headgroup of certain phospholipids (sphingolipid and lysolipid substrates), forming an alcohol (often choline) and a cyclic phosphate. This toxin acts on sphingomyelin (SM). It may also act on ceramide phosphoethanolamine (CPE), lysophosphatidylcholine (LPC) and lysophosphatidylethanolamine (LPE), but not on lysophosphatidylserine (LPS), and lysophosphatidylglycerol (LPG). It acts by transphosphatidylation, releasing exclusively cyclic phosphate products as second products. Induces dermonecrosis, hemolysis, increased vascular permeability, edema, inflammatory response, and platelet aggregation. This chain is Dermonecrotic toxin LamSicTox-alphaIC1, found in Loxosceles amazonica (Recluse spider).